The chain runs to 148 residues: Ubiquitin-conjugating enzyme E2 8 (148 aa).

The 147-residue stretch at 1 to 147 (MASKRILKEL…ARNWTQKYAM (147 aa)) folds into the UBC core domain. Cys-85 acts as the Glycyl thioester intermediate in catalysis.

This sequence belongs to the ubiquitin-conjugating enzyme family. In terms of assembly, interacts with CIP8, CHIP, NLA and XERICO. Highest expression in young stems, old leaves. Lowest levels in floral buds, anthers and young leaves.

The enzyme catalyses S-ubiquitinyl-[E1 ubiquitin-activating enzyme]-L-cysteine + [E2 ubiquitin-conjugating enzyme]-L-cysteine = [E1 ubiquitin-activating enzyme]-L-cysteine + S-ubiquitinyl-[E2 ubiquitin-conjugating enzyme]-L-cysteine.. It participates in protein modification; protein ubiquitination. Accepts the ubiquitin from the E1 complex and catalyzes its covalent attachment to other proteins. Mediates the selective degradation of short-lived and abnormal proteins. The sequence is that of Ubiquitin-conjugating enzyme E2 8 (UBC8) from Arabidopsis thaliana (Mouse-ear cress).